The primary structure comprises 117 residues: Large ribosomal subunit protein bL19 (117 aa).

Belongs to the bacterial ribosomal protein bL19 family.

Functionally, this protein is located at the 30S-50S ribosomal subunit interface and may play a role in the structure and function of the aminoacyl-tRNA binding site. This chain is Large ribosomal subunit protein bL19, found in Alkaliphilus metalliredigens (strain QYMF).